The sequence spans 601 residues: HMG domain-containing protein 4 (601 aa).

Lys8 is covalently cross-linked (Glycyl lysine isopeptide (Lys-Gly) (interchain with G-Cter in SUMO2)). Disordered regions lie at residues 51–410 (VRNS…KKKN) and 473–514 (TTVK…ASPA). Over residues 82-93 (DYYYGDISSLES) the composition is skewed to low complexity. The residue at position 102 (Ser102) is a Phosphoserine. Lys191 participates in a covalent cross-link: Glycyl lysine isopeptide (Lys-Gly) (interchain with G-Cter in SUMO2). At Ser197 the chain carries Phosphoserine. Polar residues-rich tracts occupy residues 212 to 221 (QYPSQQATVK) and 270 to 282 (DASQFAESHSANL). Positions 316–344 (IKKKKKSKKSKKKKDKEKHKEKRHSKSKR) are enriched in basic residues. Positions 394 to 404 (EEKDKERERGE) are enriched in basic and acidic residues. Positions 407-475 (KKKNMSAYQV…KQNKAEATTV (69 aa)) form a DNA-binding region, HMG box. Residues Ser497, Ser502, and Ser512 each carry the phosphoserine modification.

Its subcellular location is the nucleus. In terms of biological role, negatively regulates Wnt/beta-catenin signaling during development. This Homo sapiens (Human) protein is HMG domain-containing protein 4 (HMGXB4).